Here is a 247-residue protein sequence, read N- to C-terminus: MILFPAIDLKNGQCVRLEQGDMARATVFNLDPAAQAKSFADQGFDYLHVVDLDGAFAGKPMNAQAVEAMLKVVKMPVQLGGGIRDLKTVEAWLNKGITRVIIGTAAVRDPELVKTAAKAFPGRVAVGLDARDGKVAVEGWAETSEVTALDIAKRFEDAGVAAIIFTDIARDGLLKGLNLDATIALGDAVSIPVIASGGLASIEDVKAMLTPRARKLEGAIAGRALYDGRLDPAEALALIRAARKAGA.

The active-site Proton acceptor is the Asp-8. Catalysis depends on Asp-129, which acts as the Proton donor.

The protein belongs to the HisA/HisF family.

It localises to the cytoplasm. The catalysed reaction is 1-(5-phospho-beta-D-ribosyl)-5-[(5-phospho-beta-D-ribosylamino)methylideneamino]imidazole-4-carboxamide = 5-[(5-phospho-1-deoxy-D-ribulos-1-ylimino)methylamino]-1-(5-phospho-beta-D-ribosyl)imidazole-4-carboxamide. The protein operates within amino-acid biosynthesis; L-histidine biosynthesis; L-histidine from 5-phospho-alpha-D-ribose 1-diphosphate: step 4/9. The protein is 1-(5-phosphoribosyl)-5-[(5-phosphoribosylamino)methylideneamino] imidazole-4-carboxamide isomerase of Bradyrhizobium sp. (strain BTAi1 / ATCC BAA-1182).